We begin with the raw amino-acid sequence, 542 residues long: Formate--tetrahydrofolate ligase (542 aa).

53–60 (TPAGEGKT) is an ATP binding site.

This sequence belongs to the formate--tetrahydrofolate ligase family.

The catalysed reaction is (6S)-5,6,7,8-tetrahydrofolate + formate + ATP = (6R)-10-formyltetrahydrofolate + ADP + phosphate. Its pathway is one-carbon metabolism; tetrahydrofolate interconversion. The polypeptide is Formate--tetrahydrofolate ligase (Thermotoga maritima (strain ATCC 43589 / DSM 3109 / JCM 10099 / NBRC 100826 / MSB8)).